Consider the following 228-residue polypeptide: Sodium channel regulatory subunit beta-4 (228 aa).

A signal peptide spans 1-30 (MSRAGNRGNTQARWLGIGLLGLFLLPMYLS). The region spanning 31-148 (LEVSVGKATT…KDLNNSATIF (118 aa)) is the Ig-like C2-type domain. At 31-161 (LEVSVGKATT…VDKLEEVDNT (131 aa)) the chain is on the extracellular side. Residues Asn-45, Asn-71, Asn-113, and Asn-142 are each glycosylated (N-linked (GlcNAc...) asparagine). Cys-53 and Cys-131 are joined by a disulfide. Residues 162–182 (VTLIILAVVGGVIGLLVCILL) traverse the membrane as a helical segment. At 183 to 228 (LKKLITFILKKTREKKKECLVSSSGNDNTENGLPGSKAEEKPPTKV) the chain is on the cytoplasmic side. Positions 199–228 (KECLVSSSGNDNTENGLPGSKAEEKPPTKV) are disordered. Residues 203-213 (VSSSGNDNTEN) show a composition bias toward polar residues. The span at 219–228 (KAEEKPPTKV) shows a compositional bias: basic and acidic residues.

It belongs to the sodium channel auxiliary subunit SCN4B (TC 8.A.17) family. A voltage-gated sodium (Nav) channel consists of an ion-conducting pore-forming alpha subunit functional on its own that is regulated by one or more beta subunits. The beta subunit SCN4B is disulfide-linked to the pore-forming alpha subunit. Interacts with SCN1A; regulatory subunit of SCN1A/Nav1.1. Interacts with SCN2A; regulatory subunit of SCN2A/Nav1.2. Post-translationally, contains an interchain disulfide bond with SCN2A. Expressed at a high level in dorsal root ganglia, at a lower level in brain, spinal cord, skeletal muscle and heart.

It localises to the cell membrane. Regulatory subunit of multiple voltage-gated sodium (Nav) channels directly mediating the depolarization of excitable membranes. Navs, also called VGSCs (voltage-gated sodium channels) or VDSCs (voltage-dependent sodium channels), operate by switching between closed and open conformations depending on the voltage difference across the membrane. In the open conformation they allow Na(+) ions to selectively pass through the pore, along their electrochemical gradient. The influx of Na+ ions provokes membrane depolarization, initiating the propagation of electrical signals throughout cells and tissues. The accessory beta subunits participate in localization and functional modulation of the Nav channels. Modulates the activity of SCN1A/Nav1.1. Modulates the activity of SCN2A/Nav1.2. This is Sodium channel regulatory subunit beta-4 from Rattus norvegicus (Rat).